A 151-amino-acid chain; its full sequence is Putative phosphatidylglycerol/phosphatidylinositol transfer protein 3 (151 aa).

An N-terminal signal peptide occupies residues 1–26 (MKYSQNQIVYVIFFFIILIVVKPIES).

Belongs to the NPC2 family. As to quaternary structure, monomer.

Catalyzes the intermembrane transfer of phosphatidylglycerol and phosphatidylinositol. The polypeptide is Putative phosphatidylglycerol/phosphatidylinositol transfer protein 3 (Dictyostelium discoideum (Social amoeba)).